We begin with the raw amino-acid sequence, 323 residues long: Vertebrate ancient opsin (323 aa).

Over 1–38 the chain is Extracellular; the sequence is MDTLRIAVNGVSYNEASEIYKPHADPFTGPITNLAPWN. A helical transmembrane segment spans residues 39 to 63; that stretch reads FAVLATLMFVITSLSLFENFTVMLA. Residues 64 to 75 are Cytoplasmic-facing; that stretch reads TYKFKQLRQPLN. Residues 76–100 traverse the membrane as a helical segment; sequence YIIVNLSLADFLVSLTGGTISFLTN. The Extracellular segment spans residues 101-115; that stretch reads ARGYFFLGNWACVLE. Cysteine 112 and cysteine 189 are disulfide-bonded. The helical transmembrane segment at 116–135 threads the bilayer; sequence GFAVTYFGIVAMWSLAVLSF. Residues 136–154 are Cytoplasmic-facing; that stretch reads ERYFVICRPLGNVRLRGKH. Residues 155 to 178 form a helical membrane-spanning segment; that stretch reads AALGLLFVWTFSFIWTIPPVFGWC. Topologically, residues 179-202 are extracellular; it reads SYTVSKIGTTCEPNWYSNNIWNHT. Residue asparagine 200 is glycosylated (N-linked (GlcNAc...) asparagine). Residues 203 to 230 traverse the membrane as a helical segment; sequence YIITFFVTCFIMPLGMIIYCYGKLLQKL. The Cytoplasmic segment spans residues 231–250; it reads RKVSHDRLGNAKKPERQVSR. Residues 251–274 form a helical membrane-spanning segment; it reads MVVVMIVAYLVGWTPYAAFSIIVT. Residues 275–282 are Extracellular-facing; it reads ACPTIYLD. Residues 283 to 307 traverse the membrane as a helical segment; sequence PRLAAAPAFFSKTAAVYNPVIYVFM. Residue lysine 294 is modified to N6-(retinylidene)lysine. Over 308–323 the chain is Cytoplasmic; that stretch reads NKQVSTQLNWGFWSRA.

Belongs to the G-protein coupled receptor 1 family. Opsin subfamily. Phosphorylated on some or all of the serine and threonine residues present in the C-terminal region.

Its subcellular location is the membrane. This is Vertebrate ancient opsin from Salmo salar (Atlantic salmon).